The sequence spans 283 residues: Protease HtpX (283 aa).

2 helical membrane passes run 4–24 (ILLFLATNMAVMLVLGIILSV) and 33–53 (GGILIMALLFGFAGSLISLFL). A Zn(2+)-binding site is contributed by His139. Residue Glu140 is part of the active site. Residue His143 coordinates Zn(2+). Helical transmembrane passes span 147 to 167 (GDMVTMALLQGVLNTFVIFLS) and 190 to 210 (IYFLVSMVLEMLFGVLASIIA). Glu218 is a Zn(2+) binding site.

This sequence belongs to the peptidase M48B family. The cofactor is Zn(2+).

It localises to the cell inner membrane. This chain is Protease HtpX, found in Haemophilus influenzae (strain PittGG).